Reading from the N-terminus, the 662-residue chain is Transketolase (662 aa).

A substrate-binding site is contributed by His-28. Thiamine diphosphate contacts are provided by residues His-68 and Gly-115–Leu-117. Asp-156 serves as a coordination point for Mg(2+). Residues Gly-157 and Asn-186 each coordinate thiamine diphosphate. Mg(2+) is bound by residues Asn-186 and Ile-188. Residues His-261, Arg-356, and Ser-383 each coordinate substrate. His-261 is a thiamine diphosphate binding site. The active-site Proton donor is Glu-410. Phe-436 is a binding site for thiamine diphosphate. The substrate site is built by His-460, Asp-468, and Arg-519.

This sequence belongs to the transketolase family. Homodimer. Mg(2+) serves as cofactor. It depends on Ca(2+) as a cofactor. Mn(2+) is required as a cofactor. The cofactor is Co(2+). Requires thiamine diphosphate as cofactor.

The enzyme catalyses D-sedoheptulose 7-phosphate + D-glyceraldehyde 3-phosphate = aldehydo-D-ribose 5-phosphate + D-xylulose 5-phosphate. It participates in carbohydrate biosynthesis; Calvin cycle. Its pathway is carbohydrate degradation; pentose phosphate pathway. Functionally, catalyzes the transfer of a two-carbon ketol group from a ketose donor to an aldose acceptor, via a covalent intermediate with the cofactor thiamine pyrophosphate. This Staphylococcus epidermidis (strain ATCC 12228 / FDA PCI 1200) protein is Transketolase (tkt).